A 93-amino-acid polypeptide reads, in one-letter code: MAYNKSDLVSKIAQKSNLTKAQAEAAVNAFQDVFVEAMKSGEGLKLTGLFSAERVKRAARTGRNPRTGEQIDIPASYGVRISAGSLLKKAVTE.

This sequence belongs to the bacterial histone-like protein family. In terms of assembly, homodimer.

Histone-like DNA-binding protein which is capable of wrapping DNA to stabilize it, and thus to prevent its denaturation under extreme environmental conditions. This Bifidobacterium longum (strain NCC 2705) protein is DNA-binding protein HB1 (hup).